The chain runs to 150 residues: Large ribosomal subunit protein uL16 (150 aa).

The protein belongs to the universal ribosomal protein uL16 family. Component of the small ribosomal subunit. Mature ribosomes consist of a small (40S) and a large (60S) subunit. The 40S subunit contains about 33 different proteins and 1 molecule of RNA (18S). The 60S subunit contains about 49 different proteins and 3 molecules of RNA (25S, 5.8S and 5S).

The protein is Large ribosomal subunit protein uL16 (RPL10) of Nicotiana tabacum (Common tobacco).